A 269-amino-acid polypeptide reads, in one-letter code: Imidazoleglycerol-phosphate dehydratase 2, chloroplastic (269 aa).

A chloroplast-targeting transit peptide spans 1-51 (MTTAPFLFPSLSRLHSARASSFPKPPVGSGAGVAFPARPYGSSLRLRSSVM). Residues E83, 109-117 (HMLDQLASH), 135-139 (HHSNE), R161, and R183 contribute to the substrate site. Residues H109, H135, H136, and E139 each contribute to the Mn(2+) site. Positions 207, 231, 232, and 235 each coordinate Mn(2+). Substrate contacts are provided by residues 231–239 (HHIIEATFK) and 261–263 (SSK).

It belongs to the imidazoleglycerol-phosphate dehydratase family. Requires Mn(2+) as cofactor.

It is found in the plastid. The protein localises to the chloroplast. It catalyses the reaction D-erythro-1-(imidazol-4-yl)glycerol 3-phosphate = 3-(imidazol-4-yl)-2-oxopropyl phosphate + H2O. Its pathway is amino-acid biosynthesis; L-histidine biosynthesis; L-histidine from 5-phospho-alpha-D-ribose 1-diphosphate: step 6/9. The sequence is that of Imidazoleglycerol-phosphate dehydratase 2, chloroplastic from Triticum aestivum (Wheat).